Here is a 301-residue protein sequence, read N- to C-terminus: Phosphatidylcholine:diacylglycerol cholinephosphotransferase 1 (301 aa).

The disordered stretch occupies residues 1-39; that stretch reads MSAAAAETDVSLRRRSNSLNGNHTNGVAIDGTLDNNNRR. Helical transmembrane passes span 88–108, 141–161, 171–191, 202–222, and 255–275; these read HWIP…EYTL, VLAA…VWTW, IAAL…QLPL, FPVG…GSMI, and GHYT…DSLA. Catalysis depends on residues H216, H256, and D260.

The protein belongs to the phosphatidylcholine:diacylglycerol cholinephosphotransferase family.

The protein resides in the membrane. The catalysed reaction is 1,2-ditetradecanoyl-sn-glycero-3-phosphocholine + 1,2-di-(9Z-octadecenoyl)-sn-glycerol = 1,2-ditetradecanoyl-sn-glycerol + 1,2-di-(9Z-octadecenoyl)-sn-glycero-3-phosphocholine. In terms of biological role, functions as a phosphatidylcholine:diacylglycerol cholinephosphotransferase that catalyzes the transfer of the phosphocholine headgroup from phosphatidylcholine (PC) to diacylglycerol, a major reaction for the transfer of 18:1 into phosphatidylcholine for desaturation and also for the reverse transfer of 18:2 and 18:3 into the triacylglycerols synthesis pathway. In Arabidopsis thaliana (Mouse-ear cress), this protein is Phosphatidylcholine:diacylglycerol cholinephosphotransferase 1.